A 140-amino-acid polypeptide reads, in one-letter code: Ergosterol biosynthetic protein 28 homolog (140 aa).

The next 4 helical transmembrane spans lie at 4–24 (FLNV…GNTL), 52–72 (TFGI…IDIH), 79–99 (ITLW…FVYG), and 105–125 (IGVL…LVGL).

The protein belongs to the ERG28 family. Ubiquitous; strongly expressed in testis and some cancer cell lines.

It localises to the endoplasmic reticulum membrane. The sequence is that of Ergosterol biosynthetic protein 28 homolog from Homo sapiens (Human).